Here is a 59-residue protein sequence, read N- to C-terminus: Large ribosomal subunit protein bL33 (59 aa).

The protein belongs to the bacterial ribosomal protein bL33 family.

The polypeptide is Large ribosomal subunit protein bL33 (Borrelia recurrentis (strain A1)).